A 95-amino-acid polypeptide reads, in one-letter code: DNA-directed RNA polymerase subunit Rpo6 (95 aa).

This sequence belongs to the archaeal Rpo6/eukaryotic RPB6 RNA polymerase subunit family. Part of the 13-subunit RNA polymerase complex.

Its subcellular location is the cytoplasm. The enzyme catalyses RNA(n) + a ribonucleoside 5'-triphosphate = RNA(n+1) + diphosphate. Its function is as follows. DNA-dependent RNA polymerase (RNAP) catalyzes the transcription of DNA into RNA using the four ribonucleoside triphosphates as substrates. The chain is DNA-directed RNA polymerase subunit Rpo6 from Saccharolobus solfataricus (strain ATCC 35092 / DSM 1617 / JCM 11322 / P2) (Sulfolobus solfataricus).